We begin with the raw amino-acid sequence, 298 residues long: ATP phosphoribosyltransferase (298 aa).

Belongs to the ATP phosphoribosyltransferase family. Long subfamily. The cofactor is Mg(2+).

It is found in the cytoplasm. The catalysed reaction is 1-(5-phospho-beta-D-ribosyl)-ATP + diphosphate = 5-phospho-alpha-D-ribose 1-diphosphate + ATP. The protein operates within amino-acid biosynthesis; L-histidine biosynthesis; L-histidine from 5-phospho-alpha-D-ribose 1-diphosphate: step 1/9. Its activity is regulated as follows. Feedback inhibited by histidine. In terms of biological role, catalyzes the condensation of ATP and 5-phosphoribose 1-diphosphate to form N'-(5'-phosphoribosyl)-ATP (PR-ATP). Has a crucial role in the pathway because the rate of histidine biosynthesis seems to be controlled primarily by regulation of HisG enzymatic activity. This is ATP phosphoribosyltransferase from Psychromonas ingrahamii (strain DSM 17664 / CCUG 51855 / 37).